The sequence spans 476 residues: Cys-Gly metallodipeptidase dug1 (476 aa).

H99 provides a ligand contact to Zn(2+). The active site involves D101. D133 is a Zn(2+) binding site. The Proton acceptor role is filled by E167. Zn(2+) contacts are provided by E168, D196, and H446.

This sequence belongs to the peptidase M20A family. As to quaternary structure, homodimer. Component of the GSH degradosomal complex. It depends on Zn(2+) as a cofactor. Mn(2+) serves as cofactor.

It localises to the cytoplasm. In terms of biological role, catalytic component of the GSH degradosomal complex involved in the degradation of glutathione (GSH) and other peptides containing a gamma-glu-X bond. Has a Gly-Cys dipeptidase activity. This chain is Cys-Gly metallodipeptidase dug1 (dug1), found in Schizosaccharomyces pombe (strain 972 / ATCC 24843) (Fission yeast).